Consider the following 502-residue polypeptide: Neuronal acetylcholine receptor subunit alpha-7 (502 aa).

The signal sequence occupies residues 1–22 (MCGGRGGIWLALAAALLHVSLQ). The Extracellular segment spans residues 23-233 (GEFQRRLYKE…VTMRRRTLYY (211 aa)). 2 residues coordinate Ca(2+): R42 and V44. Residues N46, N90, and N133 are each glycosylated (N-linked (GlcNAc...) asparagine). Residues C150 and C164 are joined by a disulfide bond. The Ca(2+) site is built by S172 and Y210. Residues C212 and C213 are joined by a disulfide bond. 3 consecutive transmembrane segments (helical) span residues 234–254 (GLNLLIPCVLISALALLVFLL), 262–282 (ISLGITVLLSLTVFMLLVAEI), and 295–315 (QYFASTMIIVGLSVVVTVIVL). Positions 260–267 (EKISLGIT) are essential for TMEM35A/NACHO-mediated proper subunit assembly and trafficking to cell membrane. The Cytoplasmic segment spans residues 316 to 469 (RYHHHDPDGG…WKFAACVVDR (154 aa)). A helical membrane pass occupies residues 470-490 (LCLMAFSVFTIICTIGILMSA).

Belongs to the ligand-gated ion channel (TC 1.A.9) family. Acetylcholine receptor (TC 1.A.9.1) subfamily. Alpha-7/CHRNA7 sub-subfamily. As to quaternary structure, homopentamer. Can also form heteropentamers with CHRNB2, mainly found in basal forebrain cholinergic neurons. Interacts with RIC3; which is required for proper folding and assembly. Interacts with LYPD6. Interacts with CANX. Glycosylations at Asn-46, Asn-90 and Asn-133 are essential for TMEM35A/NACHO-mediated proper subunit assembly and trafficking to the cell membrane. In terms of tissue distribution, expressed in neurons. Expressed in umbrella cells of urothelium (at protein level).

The protein resides in the postsynaptic cell membrane. It is found in the cell membrane. It carries out the reaction Ca(2+)(in) = Ca(2+)(out). It catalyses the reaction K(+)(in) = K(+)(out). The enzyme catalyses Na(+)(in) = Na(+)(out). The catalysed reaction is choline(out) = choline(in). It carries out the reaction NH4(+)(in) = NH4(+)(out). It catalyses the reaction L-arginine(in) = L-arginine(out). The enzyme catalyses guanidine(out) = guanidine(in). With respect to regulation, activated by a myriad of ligands such as acetylcholine, cytisine, nicotine, choline and epibatidine. Oligomeric amyloid-beta protein 42 activates specifially CHRNA7:CHRNB2 nAchRs. Activity is modulated by positive allosteric modulators (PAMs), such as flavonoids, with a wide range of chemical diversity, pharmacological sensitivity and efficacy. AChR activity is inhibited by the antagonists alpha-conotoxons RgIA, ImI and ImII, small disulfide-constrained peptides from cone snails. Alpha-conotoxin PnIC selectively inhibits CHRNA7:CHRNB2 over CHRNA7 homopentamer. Component of neuronal acetylcholine receptors (nAChRs) that function as pentameric, ligand-gated cation channels with high calcium permeability among other activities. nAChRs are excitatory neurotrasnmitter receptors formed by a collection of nAChR subunits known to mediate synaptic transmission in the nervous system and the neuromuscular junction. Each nAchR subunit confers differential attributes to channel properties, including activation, deactivation and desensitization kinetics, pH sensitivity, cation permeability, and binding to allosteric modulators. CHRNA7 forms homopentameric neuronal acetylcholine receptors abundantly expressed in the central nervous system, characterized by fast desensitization and high calcium permeability. Also forms heteropentamers with CHRNB2, mainly expressed in basal forebrain cholinergic neurons. Involved in the modulation of calcium-dependent signaling pathways and influences the release of neurotransmitters, including dopamine, glutamate and GABA. Also expressed in non-neuronal cells such as immune cells like lymphocytes, monocytes and macrophages. In T cells, activation induces metabotropic signaling that results in an increase of intracellular Ca2+ concentrations, independent of ionotropic receptor functions. In macrophages, required for acetylcholine-mediated inhibition of TNF and other inflammatory cytokine release. Once activated by acetylcholine, nicotine or other agonists, selectively inhibits production of pro-inflammatory cytokines while leaving anti-inflammatory cytokines undisturbed. Stimulates the cholinergic anti-inflammatory pathway, controlling inflammation by inhibiting NFKB nuclear translocation and activating the JAK2-STAT3 pathway, independently of ion channel activity. Also expressed in the urothelium where it modulates reflex bladder activity by increasing intracellular calcium through internal stores and decreasing basal ATP release. This chain is Neuronal acetylcholine receptor subunit alpha-7 (Chrna7), found in Rattus norvegicus (Rat).